The primary structure comprises 61 residues: Sperm protamine P1 (61 aa).

Residues Met1–Tyr61 are disordered.

This sequence belongs to the protamine P1 family. Testis.

The protein resides in the nucleus. The protein localises to the chromosome. Protamines substitute for histones in the chromatin of sperm during the haploid phase of spermatogenesis. They compact sperm DNA into a highly condensed, stable and inactive complex. The chain is Sperm protamine P1 (PRM1) from Macropus giganteus (Eastern gray kangaroo).